The primary structure comprises 73 residues: Translation initiation factor IF-1 (73 aa).

The S1-like domain maps to 1–72; sequence MPKKDAIEVE…TRGRVTYRFK (72 aa).

The protein belongs to the IF-1 family. In terms of assembly, component of the 30S ribosomal translation pre-initiation complex which assembles on the 30S ribosome in the order IF-2 and IF-3, IF-1 and N-formylmethionyl-tRNA(fMet); mRNA recruitment can occur at any time during PIC assembly.

It is found in the cytoplasm. In terms of biological role, one of the essential components for the initiation of protein synthesis. Stabilizes the binding of IF-2 and IF-3 on the 30S subunit to which N-formylmethionyl-tRNA(fMet) subsequently binds. Helps modulate mRNA selection, yielding the 30S pre-initiation complex (PIC). Upon addition of the 50S ribosomal subunit IF-1, IF-2 and IF-3 are released leaving the mature 70S translation initiation complex. The sequence is that of Translation initiation factor IF-1 from Dehalococcoides mccartyi (strain ATCC BAA-2266 / KCTC 15142 / 195) (Dehalococcoides ethenogenes (strain 195)).